Consider the following 326-residue polypeptide: Transposase InsH for insertion sequence element IS5A (326 aa).

It belongs to the transposase 11 family.

In terms of biological role, involved in the transposition of the insertion sequence IS5. In Escherichia coli (strain K12), this protein is Transposase InsH for insertion sequence element IS5A (insH1).